The chain runs to 274 residues: Copper chaperone for superoxide dismutase (274 aa).

In terms of domain architecture, HMA spans 11 to 74; sequence LCTLEFAVQM…LLEGTGRQAV (64 aa). Cu cation-binding residues include Cys-22 and Cys-25. Lys-76 participates in a covalent cross-link: Glycyl lysine isopeptide (Lys-Gly) (interchain with G-Cter in ubiquitin). Residues 88–234 form a superoxide dismutase-like region; sequence AAVAILGGPG…LACGIIARSA (147 aa). Cys-141 and Cys-227 are joined by a disulfide. His-147, His-155, His-164, and Asp-167 together coordinate Zn(2+). Residues Lys-189, Lys-216, and Lys-241 each participate in a glycyl lysine isopeptide (Lys-Gly) (interchain with G-Cter in ubiquitin) cross-link. Cu cation is bound by residues Cys-244 and Cys-246. Ser-267 is subject to Phosphoserine.

It in the C-terminal section; belongs to the Cu-Zn superoxide dismutase family. In terms of assembly, homodimer, and heterodimer with SOD1. Interacts with COMMD1. Interacts with XIAP/BIRC4. Interacts with SLC31A1(via C-terminal domain); this interaction is Cu(1+)-mediated. The heterodimer CCS:SOD1 interacts with SLC31A1; this heterotrimer is Cu(1+)-mediated and its maintenance is regulated through SOD1 activation. Cu(2+) is required as a cofactor. Requires Zn(2+) as cofactor. In terms of processing, ubiquitinion by XIAP/BIRC4 leads to enhancement of its chaperone activity toward its physiologic target, SOD1, rather than proteasomal degradation. XIAP/BIRC4 preferentially ubiquitinates at Lys-241. As to expression, ubiquitous.

Its subcellular location is the cytoplasm. In terms of biological role, delivers copper to copper zinc superoxide dismutase (SOD1). The sequence is that of Copper chaperone for superoxide dismutase from Homo sapiens (Human).